The chain runs to 335 residues: Mevalonate kinase (335 aa).

111–121 (PVGAGLGSSAA) is a binding site for ATP. Asp-162 acts as the Proton acceptor in catalysis.

Belongs to the GHMP kinase family. Mevalonate kinase subfamily. Homodimer. Mg(2+) serves as cofactor.

It localises to the cytoplasm. The catalysed reaction is (R)-mevalonate + ATP = (R)-5-phosphomevalonate + ADP + H(+). It functions in the pathway isoprenoid biosynthesis; isopentenyl diphosphate biosynthesis via mevalonate pathway; isopentenyl diphosphate from (R)-mevalonate: step 1/3. In terms of biological role, catalyzes the phosphorylation of (R)-mevalonate (MVA) to (R)-mevalonate 5-phosphate (MVAP). Functions in the mevalonate (MVA) pathway leading to isopentenyl diphosphate (IPP), a key precursor for the biosynthesis of isoprenoid compounds such as archaeal membrane lipids. This chain is Mevalonate kinase, found in Pyrococcus abyssi (strain GE5 / Orsay).